The chain runs to 3655 residues: NuA4 acetyltransferase complex subunit Tra2 (3655 aa).

Residues 8 to 2459 (SLSSSIELLK…REYHIRLLGK (2452 aa)) form an HEAT region. 26 HEAT repeats span residues 46 to 89 (QLYA…CAHR), 94 to 131 (QYAQ…TFKF), 149 to 188 (TNLP…IIQQ), 230 to 268 (PGVQ…FIEF), 300 to 338 (LSEK…ILST), 374 to 412 (STLA…SIGL), 438 to 475 (FLLL…ETKS), 606 to 643 (IFLK…STSS), 644 to 683 (KFLN…VTVS), 735 to 772 (SLYK…ELCL), 783 to 820 (PYMS…LTPD), 828 to 867 (PYIE…RNRK), 1100 to 1141 (AFIL…QDHS), 1147 to 1184 (DRQV…QLFR), 1193 to 1230 (EIAP…LSNT), 1429 to 1470 (RKLL…LFHL), 1665 to 1704 (NLVS…FLLK), 1709 to 1746 (GILL…NVYA), 1753 to 1790 (IGAL…SEDV), 1808 to 1846 (QFPY…YIFS), 1891 to 1934 (EHRG…WNDL), 1973 to 2011 (SEAI…TDAN), 2036 to 2073 (ENLS…LSNT), 2120 to 2157 (DALH…LQIV), 2183 to 2221 (DQRR…NSPV), and 2401 to 2438 (DFVL…DEIP). A head region spans residues 2460–3655 (TPNVLETILT…QMDQLWQAWL (1196 aa)). In terms of domain architecture, FAT spans 2484–3045 (LLVYLSKTYG…HFQLRTAYED (562 aa)). A disordered region spans residues 3059–3105 (RGNSRLRENDSSSDNKSKDLSPSGSFSSVSQFNSKNGSPSSIDSSEK). A compositionally biased stretch (basic and acidic residues) spans 3063–3077 (RLRENDSSSDNKSKD). Residues 3078–3092 (LSPSGSFSSVSQFNS) are compositionally biased toward low complexity. The PI3K/PI4K catalytic domain maps to 3285 to 3625 (VPNVDLVRGH…VISHNVPEDL (341 aa)). The segment at 3291 to 3297 (VRGHTMC) is G-loop. Positions 3491 to 3499 (NIGGRSPQK) are catalytic loop. Residues 3511-3536 (SQDLLPSMTSNQPVFHNTEAVPFRLT) are activation loop. The FATC domain occupies 3623-3655 (EDLPLNQTLVDLVSQATNPQQLAQMDQLWQAWL).

This sequence belongs to the PI3/PI4-kinase family. TRA1 subfamily. As to quaternary structure, component of the NuA4 acetyltransferase complex. Tra1 is the scaffold subunit for binding to a variety of transcription activators or transcription factors to recruit NuA4 for targeted gene activation. Requires Hsp90 and its co-chaperone, the Triple-T complex (TTT), for its incorporation into NuA4. Interacts with tel2.

Functionally, component of the NuA4 histone H4/H2A acetyltransferase involved in transcription and DNA repair. This chain is NuA4 acetyltransferase complex subunit Tra2, found in Schizosaccharomyces pombe (strain 972 / ATCC 24843) (Fission yeast).